The primary structure comprises 498 residues: MRINPTTSGSGVSTLEKQTLGRIVQIIGPVLDVAFPPGKMPNIYNALVVKGRDSAGQPINVTCEVQQLLGNNRVRAVAMSATDGLTRGMEVIDMGAAISVPVGGATLGRIFNVLGEPVDNLGPVDTSTTSPIHRSAPAFIQLDTKLAIFETGIKVVDLLAPYRRGGKIGLFGGAGVGKTVLIMELINNIAKAHGGVSVFGGVGERTREGNDLYMEMKESGVINEENIAESKVALVYGQMNEPPGARMRVGLTALTMAEYFRDVNEQDVLLFIDNIFRFVQAGSEVSALLGRMPSAVGYQPTLSTEMGSLQERITSTKEGSITSIQAVYVPADDLTDPAPATTFAHLDATTVLSRGLAAKGIYPAVDPLDSTSTMLQPRIVGEEHYETAQRVKETLQRYKELQDIIAILGLDELSEEDRLTVARARKIERFLSQPFFVAEVFTGSPGKYVGLAETIRGFQLILSGELDSFPEQAFYLVGNIDEATAKAMNLEMESNLKK.

172–179 contributes to the ATP binding site; that stretch reads GGAGVGKT.

The protein belongs to the ATPase alpha/beta chains family. In terms of assembly, F-type ATPases have 2 components, CF(1) - the catalytic core - and CF(0) - the membrane proton channel. CF(1) has five subunits: alpha(3), beta(3), gamma(1), delta(1), epsilon(1). CF(0) has four main subunits: a(1), b(1), b'(1) and c(9-12).

Its subcellular location is the plastid. The protein resides in the chloroplast thylakoid membrane. The enzyme catalyses ATP + H2O + 4 H(+)(in) = ADP + phosphate + 5 H(+)(out). In terms of biological role, produces ATP from ADP in the presence of a proton gradient across the membrane. The catalytic sites are hosted primarily by the beta subunits. This Montinia caryophyllacea (Wild clove bush) protein is ATP synthase subunit beta, chloroplastic.